The following is a 106-amino-acid chain: MDISKLMQQAKDMQGKMAAIQEDLAKKIITGSAGGGMVEVQVNGQGEILAIKIEDALINTDEKEMLQDLVTAATNDGLRRAKDLSKQEMGQLTGGMNLPDLTNFLS.

The protein belongs to the YbaB/EbfC family. In terms of assembly, homodimer.

The protein resides in the cytoplasm. It localises to the nucleoid. Its function is as follows. Binds to DNA and alters its conformation. May be involved in regulation of gene expression, nucleoid organization and DNA protection. The sequence is that of Nucleoid-associated protein DP1429 from Desulfotalea psychrophila (strain LSv54 / DSM 12343).